Consider the following 39-residue polypeptide: Cytochrome b559 subunit beta (39 aa).

The helical transmembrane segment at 14–30 (WLAIHGLAVPTVSFLGS) threads the bilayer. H18 lines the heme pocket.

It belongs to the PsbE/PsbF family. As to quaternary structure, heterodimer of an alpha subunit and a beta subunit. PSII is composed of 1 copy each of membrane proteins PsbA, PsbB, PsbC, PsbD, PsbE, PsbF, PsbH, PsbI, PsbJ, PsbK, PsbL, PsbM, PsbT, PsbX, PsbY, PsbZ, Psb30/Ycf12, at least 3 peripheral proteins of the oxygen-evolving complex and a large number of cofactors. It forms dimeric complexes. Requires heme b as cofactor.

The protein localises to the plastid. It localises to the chloroplast thylakoid membrane. Functionally, this b-type cytochrome is tightly associated with the reaction center of photosystem II (PSII). PSII is a light-driven water:plastoquinone oxidoreductase that uses light energy to abstract electrons from H(2)O, generating O(2) and a proton gradient subsequently used for ATP formation. It consists of a core antenna complex that captures photons, and an electron transfer chain that converts photonic excitation into a charge separation. This is Cytochrome b559 subunit beta from Allium textile (Textile onion).